The primary structure comprises 122 residues: Large ribosomal subunit protein bL12 (122 aa).

This sequence belongs to the bacterial ribosomal protein bL12 family. In terms of assembly, homodimer. Part of the ribosomal stalk of the 50S ribosomal subunit. Forms a multimeric L10(L12)X complex, where L10 forms an elongated spine to which 2 to 4 L12 dimers bind in a sequential fashion. Binds GTP-bound translation factors.

Its function is as follows. Forms part of the ribosomal stalk which helps the ribosome interact with GTP-bound translation factors. Is thus essential for accurate translation. The chain is Large ribosomal subunit protein bL12 from Actinobacillus succinogenes (strain ATCC 55618 / DSM 22257 / CCUG 43843 / 130Z).